We begin with the raw amino-acid sequence, 31 residues long: Delta-actitoxin-Dar1b (31 aa).

Belongs to the sea anemone short toxin (type III) family. Contains 4 disulfide bonds.

The protein resides in the secreted. It localises to the nematocyst. Its function is as follows. Binds specifically to voltage-gated sodium channels (Nav), thereby delaying their inactivation during signal transduction. The polypeptide is Delta-actitoxin-Dar1b (Dofleinia armata (Armed anemone)).